Reading from the N-terminus, the 260-residue chain is MQFPHIDPVFFRLGHLEFRWYGLMYILGFIAAYFIVRRAAGRRGLALTQDDVADVIFSLAIGVILGGRLGYILFYNLSYYLSHPLKLFAVWEGGMSFHGGLLGVILAGVYVARQKKIGFPVLADICAPAAPVGLGLGRLGNFINGELYGRVTDVPWGIIFPGGGGVPRHPSQLYEAVLEGPVLFLILMAVGRRERPAGVVFWTFIAFYGLFRFLVEFFREPDAQLGLLAGPFSMGQLLSFPMFLLGLTMAVLVSRRKVGP.

3 helical membrane-spanning segments follow: residues 16 to 36 (LEFR…YFIV), 55 to 75 (VIFS…ILFY), and 87 to 107 (LFAV…VILA). Arg-138 serves as a coordination point for a 1,2-diacyl-sn-glycero-3-phospho-(1'-sn-glycerol). 2 helical membrane passes run 198–218 (GVVF…VEFF) and 232–252 (FSMG…MAVL).

This sequence belongs to the Lgt family.

Its subcellular location is the cell inner membrane. The enzyme catalyses L-cysteinyl-[prolipoprotein] + a 1,2-diacyl-sn-glycero-3-phospho-(1'-sn-glycerol) = an S-1,2-diacyl-sn-glyceryl-L-cysteinyl-[prolipoprotein] + sn-glycerol 1-phosphate + H(+). Its pathway is protein modification; lipoprotein biosynthesis (diacylglyceryl transfer). Catalyzes the transfer of the diacylglyceryl group from phosphatidylglycerol to the sulfhydryl group of the N-terminal cysteine of a prolipoprotein, the first step in the formation of mature lipoproteins. This is Phosphatidylglycerol--prolipoprotein diacylglyceryl transferase from Geobacter sulfurreducens (strain ATCC 51573 / DSM 12127 / PCA).